Here is a 256-residue protein sequence, read N- to C-terminus: Type III pantothenate kinase 1 (256 aa).

6–13 (DIGNSHIF) provides a ligand contact to ATP. 107–110 (GADR) is a binding site for substrate. Asp109 acts as the Proton acceptor in catalysis. Residue Asp130 coordinates K(+). An ATP-binding site is contributed by Thr133. A substrate-binding site is contributed by Thr185.

Belongs to the type III pantothenate kinase family. As to quaternary structure, homodimer. The cofactor is NH4(+). K(+) is required as a cofactor.

It localises to the cytoplasm. The enzyme catalyses (R)-pantothenate + ATP = (R)-4'-phosphopantothenate + ADP + H(+). It functions in the pathway cofactor biosynthesis; coenzyme A biosynthesis; CoA from (R)-pantothenate: step 1/5. Its function is as follows. Catalyzes the phosphorylation of pantothenate (Pan), the first step in CoA biosynthesis. The polypeptide is Type III pantothenate kinase 1 (Francisella tularensis subsp. holarctica (strain LVS)).